The following is a 499-amino-acid chain: Serine/threonine-protein phosphatase 5 (499 aa).

Residues 1-23 (MAMAEGERTECAEPPRDEPPAEG) are disordered. The residue at position 2 (A2) is an N-acetylalanine. TPR repeat units follow at residues 28–61 (AEEL…NPSN), 62–95 (AIYY…DKKY), and 96–129 (IKGY…KPND). The catalytic stretch occupies residues 200-499 (DQKKLHRKCA…ANTLLQLGMM (300 aa)). D242, H244, and D271 together coordinate Mg(2+). H244 lines the substrate pocket. Substrate is bound by residues R275 and 303–304 (NH). Position 303 (N303) interacts with Mg(2+). H304 serves as the catalytic Proton donor/acceptor. Residue H352 participates in Mg(2+) binding. Substrate is bound by residues R400 and H427. Mg(2+) is bound at residue H427. The tract at residues 495–499 (QLGMM) is required for autoinhibition.

This sequence belongs to the PPP phosphatase family. PP-5 (PP-T) subfamily. In terms of assembly, probably forms a complex composed of chaperones HSP90 and HSP70, co-chaperones STIP1/HOP, CDC37, PPP5C, PTGES3/p23, TSC1 and client protein TSC2. Probably forms a complex composed of chaperones HSP90 and HSP70, co-chaperones CDC37, PPP5C, TSC1 and client protein TSC2, CDK4, AKT, RAF1 and NR3C1; this complex does not contain co-chaperones STIP1/HOP and PTGES3/p23. Part of a complex with HSP90/HSP90AA1 and steroid receptors. Interacts (via TPR repeats) with HSP90AA1 (via TPR repeat-binding motif) or HSPA1A/HSPA1B; the interaction is direct and activates the phosphatase activity. Dissociates from HSPA1A/HSPA1B and HSP90AA1 in response to arachidonic acid. Interacts with CPNE1 (via VWFA domain). Interacts with CDC16, CDC27. Interacts with KLHDC10 (via the 6 Kelch repeats); inhibits the phosphatase activity on MAP3K5. Interacts with ATM and ATR; both interactions are induced by DNA damage and enhance ATM and ATR kinase activity. Interacts with RAD17; reduced by DNA damage. Interacts with nuclear receptors such as NR3C1/GCR and PPARG (activated by agonist); regulates their transactivation activities. Interacts (via TPR repeats) with S100 proteins S100A1, S100A2, S100A6, S100B and S100P; the interactions are calcium-dependent, strongly activate PPP5C phosphatase activity and compete with HSP90AA1 and MAP3K5 interactions. Interacts with SMAD2 and SMAD3 but not with SMAD1; decreases SMAD3 phosphorylation and protein levels. Interacts (via TPR repeats) with CRY1 and CRY2; the interaction with CRY2 down-regulates the phosphatase activity on CSNK1E. Interacts (via TPR repeats) with the active form of RAC1, GNA12 or GNA13; these interactions activate the phosphatase activity and translocate PPP5C to the cell membrane. Interacts with FLCN. Requires Mg(2+) as cofactor. Mn(2+) serves as cofactor. Activated by at least two different proteolytic cleavages producing a 56 kDa and a 50 kDa form. As to expression, predominantly found in brain and, in lower levels, in testis, but was nearly undetectable in spleen, lung, skeletal muscle, kidney and liver.

The protein localises to the nucleus. The protein resides in the cytoplasm. It is found in the cell membrane. The enzyme catalyses O-phospho-L-seryl-[protein] + H2O = L-seryl-[protein] + phosphate. It carries out the reaction O-phospho-L-threonyl-[protein] + H2O = L-threonyl-[protein] + phosphate. With respect to regulation, autoinhibited. In the autoinhibited state, the TPR domain interacts with the catalytic region and prevents substrate access to the catalytic pocket. Allosterically activated by various polyunsaturated fatty acids, free long-chain fatty-acids and long-chain fatty acyl-CoA esters, arachidonic acid being the most effective activator. HSP90A and probably RAC1, GNA12 and GNA13 can also release the autoinhibition by the TPR repeat. Activation by RAC1, GNA12 and GNA13 is synergistic with the one produced by fatty acids binding. Inhibited by okadaic acid. Functionally, serine/threonine-protein phosphatase that dephosphorylates a myriad of proteins involved in different signaling pathways including the kinases CSNK1E, ASK1/MAP3K5, PRKDC and RAF1, the nuclear receptors NR3C1, PPARG, ESR1 and ESR2, SMAD proteins and TAU/MAPT. Implicated in wide ranging cellular processes, including apoptosis, differentiation, DNA damage response, cell survival, regulation of ion channels or circadian rhythms, in response to steroid and thyroid hormones, calcium, fatty acids, TGF-beta as well as oxidative and genotoxic stresses. Participates in the control of DNA damage response mechanisms such as checkpoint activation and DNA damage repair through, for instance, the regulation ATM/ATR-signaling and dephosphorylation of PRKDC and TP53BP1. Inhibits ASK1/MAP3K5-mediated apoptosis induced by oxidative stress. Plays a positive role in adipogenesis, mainly through the dephosphorylation and activation of PPARG transactivation function. Also dephosphorylates and inhibits the anti-adipogenic effect of NR3C1. Regulates the circadian rhythms, through the dephosphorylation and activation of CSNK1E. May modulate TGF-beta signaling pathway by the regulation of SMAD3 phosphorylation and protein expression levels. Dephosphorylates and may play a role in the regulation of TAU/MAPT. Through their dephosphorylation, may play a role in the regulation of ions channels such as KCNH2. Dephosphorylate FNIP1, disrupting interaction with HSP90AA1/Hsp90. The chain is Serine/threonine-protein phosphatase 5 (Ppp5c) from Rattus norvegicus (Rat).